A 276-amino-acid polypeptide reads, in one-letter code: Type III pantothenate kinase (276 aa).

18–25 (EIGNSRLH) contributes to the ATP binding site. Substrate-binding positions include Tyr116 and 120 to 123 (GIDR). The active-site Proton acceptor is the Asp122. Asp142 is a binding site for K(+). Thr145 provides a ligand contact to ATP. Position 200 (Thr200) interacts with substrate.

Belongs to the type III pantothenate kinase family. In terms of assembly, homodimer. NH4(+) serves as cofactor. K(+) is required as a cofactor.

The protein localises to the cytoplasm. The catalysed reaction is (R)-pantothenate + ATP = (R)-4'-phosphopantothenate + ADP + H(+). The protein operates within cofactor biosynthesis; coenzyme A biosynthesis; CoA from (R)-pantothenate: step 1/5. Functionally, catalyzes the phosphorylation of pantothenate (Pan), the first step in CoA biosynthesis. The chain is Type III pantothenate kinase from Nostoc sp. (strain PCC 7120 / SAG 25.82 / UTEX 2576).